Consider the following 297-residue polypeptide: MVSIKVSLADFIVKTEEGWIPSDNCPALDRFKTKTEKELLDSIKKEGADRASIRKQLFLTSISNKRLTQLGGVPVRDIRTSTTIPSSTRNLITDWLLNIFNDEESGEEVESAIASKYPDIFCSADKISRVAQRLENRRDRVHEDGFRILSATMLAIDSDIATEGKCEIVRATEDAIIAKFEPVSEHLCIGNPRGVFYKAFPIKKEQPMVYGVKALLGISNRDFIMNHGHGHLRTVPYSEINNAVRSFAKKNEAEIKRIRSDSLSPNAGEKFINMCDMLLQKEKIETVIAKIMKSDKN.

Residues 119–121, K198, and 227–229 each bind ATP; these read DIF and HGH. The interval 212 to 247 is RNA-binding; it reads VKALLGISNRDFIMNHGHGHLRTVPYSEINNAVRSF. H231 functions as the For NTPase and RTPase activities in the catalytic mechanism. R233 contributes to the ATP binding site.

The protein belongs to the rotavirus NSP2 family. As to quaternary structure, homooctamer. Interacts with VP1; this interaction is weak. Interacts with NSP5; this interaction leads to up-regulation of NSP5 phosphorylation and formation of viral factories. The cofactor is Mg(2+).

The protein resides in the host cytoplasm. In terms of biological role, participates in replication and packaging of the viral genome. Plays a crucial role, together with NSP5, in the formation of virus factories (viroplasms) which are large inclusions in the host cytoplasm where replication intermediates are assembled and viral RNA replication takes place. Displays ssRNA binding, NTPase, RNA triphosphatase (RTPase) and ATP-independent helix-unwinding activities. The unwinding activity may prepare and organize plus-strand RNAs for packaging and replication by removing interfering secondary structures. The RTPase activity plays a role in the removal of the gamma-phosphate from the rotavirus RNA minus strands of dsRNA genome segments. This chain is Non-structural protein 2, found in Homo sapiens (Human).